A 294-amino-acid chain; its full sequence is Single-stranded nucleic acid-binding protein (294 aa).

The tract at residues 1-30 (MSAEIEEATNAVNNLSINDSEQQPRAPTHK) is disordered. Serine 2 carries the post-translational modification N-acetylserine. Phosphoserine occurs at positions 2 and 16. Residues 10-25 (NAVNNLSINDSEQQPR) show a composition bias toward polar residues. The RRM 1 domain maps to 37–119 (DTIFIGNVAH…REIHIKRART (83 aa)). Position 49 is a phosphothreonine (threonine 49). Serine 66 carries the post-translational modification Phosphoserine. Threonine 91 and threonine 119 each carry phosphothreonine. Arginine 125 bears the Omega-N-methylarginine mark. The interval 131–151 (RGGFRGRGGFRGGFRGGYRGG) is RNA-binding RGG-box. Residues arginine 135, arginine 137, and arginine 141 each carry the dimethylated arginine modification. Position 145 is a dimethylated arginine; alternate (arginine 145). Position 145 is an omega-N-methylarginine; alternate (arginine 145). At arginine 149 the chain carries Omega-N-methylarginine. The segment covering 151-169 (GFRGRGNFRGRGGARGGFN) has biased composition (gly residues). The segment at 151-171 (GFRGRGNFRGRGGARGGFNGQ) is disordered. A dimethylated arginine mark is found at arginine 153, arginine 155, and arginine 159. Dimethylated arginine; alternate occurs at positions 161 and 165. An omega-N-methylarginine; alternate mark is found at arginine 161 and arginine 165. One can recognise an RRM 2 domain in the interval 186–274 (DTLYINNVPF…RELTVDVAVI (89 aa)). Threonine 242 bears the Phosphothreonine mark. Serine 244 carries the post-translational modification Phosphoserine. A disordered region spans residues 275–294 (RPENDEEEIEQETGSEEKQE). The segment covering 278 to 288 (NDEEEIEQETG) has biased composition (acidic residues). Phosphothreonine is present on threonine 287. Serine 289 carries the post-translational modification Phosphoserine.

It belongs to the RRM GAR family. In terms of assembly, associated with snR10 and snR11 small nuclear RNAs.

It is found in the cytoplasm. Its subcellular location is the nucleus. The protein resides in the nucleolus. It localises to the P-body. The protein localises to the stress granule. In terms of biological role, functions in the transition of mRNAs from translation to an mRNP complex destined for decapping. High-copy-number suppressor of decapping defects. Overexpression suppresses decapping defects in both DCP1-2 and DCP2-7 mutations. Acts to promote translational repression of mRNA in conjunction with DHH1 and subsequent mRNA localization to P bodies. Promotes translational repression of mRNA during glucose deprivation. This is Single-stranded nucleic acid-binding protein (SBP1) from Saccharomyces cerevisiae (strain ATCC 204508 / S288c) (Baker's yeast).